A 398-amino-acid polypeptide reads, in one-letter code: G2/mitotic-specific cyclin-B2 (398 aa).

Disordered regions lie at residues Met1–Ser26 and Ala53–Ala76. At Thr8 the chain carries Phosphothreonine. Positions Thr8 to Lys23 are enriched in polar residues. The span at Asn55 to Asn69 shows a compositional bias: low complexity. Phosphoserine is present on residues Ser77 and Ser92. The residue at position 94 (Thr94) is a Phosphothreonine. Ser99, Ser392, and Ser398 each carry phosphoserine.

This sequence belongs to the cyclin family. Cyclin AB subfamily. In terms of assembly, interacts with the CDK1 protein kinase to form a serine/threonine kinase holoenzyme complex also known as maturation promoting factor (MPF). The cyclin subunit imparts substrate specificity to the complex.

Essential for the control of the cell cycle at the G2/M (mitosis) transition. In Bos taurus (Bovine), this protein is G2/mitotic-specific cyclin-B2 (CCNB2).